Reading from the N-terminus, the 327-residue chain is UDP-glucose 4-epimerase (327 aa).

Thr119 contributes to the substrate binding site. Tyr143 functions as the Proton acceptor in the catalytic mechanism.

The protein belongs to the NAD(P)-dependent epimerase/dehydratase family. It depends on NAD(+) as a cofactor.

The catalysed reaction is UDP-alpha-D-glucose = UDP-alpha-D-galactose. It participates in carbohydrate metabolism; galactose metabolism. It functions in the pathway glycan metabolism; exopolysaccharide biosynthesis. The polypeptide is UDP-glucose 4-epimerase (exoB) (Rhizobium leguminosarum bv. trifolii).